Reading from the N-terminus, the 74-residue chain is Conotoxin VnMEKL-0222 (74 aa).

The signal sequence occupies residues 1 to 19 (MEKLTILLLVAAVLMSTQA). Positions 20 to 46 (LIQEKRPKEKIKFLSKRKSIPESWWEG) are excised as a propeptide. Disulfide bonds link C48–C62, C55–C66, and C61–C71.

Belongs to the conotoxin O2 superfamily. Expressed by the venom duct.

It is found in the secreted. The polypeptide is Conotoxin VnMEKL-0222 (Conus ventricosus (Mediterranean cone)).